Here is a 799-residue protein sequence, read N- to C-terminus: MAFRVSGAVLGGAVRAPRLTGGGEGSLVFRHTGLFLTRGARVGCSGTHGAMRAAAAARKAVMVPEGENDGLASRADSAQFQSDELEVPDISEETTCGAGVADAQALNRVRVVPPPSDGQKIFQIDPMLQGYKYHLEYRYSLYRRIRSDIDEHEGGLEAFSRSYEKFGFNASAEGITYREWAPGAFSAALVGDVNNWDPNADRMSKNEFGVWEIFLPNNADGTSPIPHGSRVKVRMDTPSGIKDSIPAWIKYSVQAPGEIPYDGIYYDPPEEVKYVFRHAQPKRPKSLRIYETHVGMSSPEPKINTYVNFRDEVLPRIKKLGYNAVQIMAIQEHSYYGSFGYHVTNFFAPSSRFGTPEDLKSLIDRAHELGLLVLMDVVHSHASSNTLDGLNGFDGTDTHYFHSGPRGHHWMWDSRLFNYGNWEVLRFLLSNARWWLEEYKFDGFRFDGVTSMMYTHHGLQVTFTGNFNEYFGFATDVDAVVYLMLVNDLIHGLYPEAVTIGEDVSGMPTFALPVHDGGVGFDYRMHMAVADKWIDLLKQSDETWKMGDIVHTLTNRRWLEKCVTYAESHDQALVGDKTIAFWLMDKDMYDFMALDRPSTPTIDRGIALHKMIRLITMGLGGEGYLNFMGNEFGHPEWIDFPRGPQRLPSGKFIPGNNNSYDKCRRRFDLGDADYLRYHGMQEFDQAMQHLEQKYEFMTSDHQYISRKHEEDKVIVFEKGDLVFVFNFHCNNSYFDYRIGCRKPGVYKVVLDSDAGLFGGFSRIHHAAEHFTADCSHDNRPYSFSVYTPSRTCVVYAPVE.

The transit peptide at 1 to 57 directs the protein to the chloroplast; the sequence is MAFRVSGAVLGGAVRAPRLTGGGEGSLVFRHTGLFLTRGARVGCSGTHGAMRAAAAA. Positions 196 and 232 each coordinate (1,4-alpha-D-glucosyl)n. Asp447 functions as the Nucleophile in the catalytic mechanism. Glu502 acts as the Proton donor in catalysis.

It belongs to the glycosyl hydrolase 13 family. GlgB subfamily. As to quaternary structure, monomer.

The protein localises to the plastid. Its subcellular location is the chloroplast. It is found in the amyloplast. The catalysed reaction is Transfers a segment of a (1-&gt;4)-alpha-D-glucan chain to a primary hydroxy group in a similar glucan chain.. Its pathway is glycan biosynthesis; starch biosynthesis. Catalyzes the formation of the alpha-1,6-glucosidic linkages in starch by scission of a 1,4-alpha-linked oligosaccharide from growing alpha-1,4-glucan chains and the subsequent attachment of the oligosaccharide to the alpha-1,6 position. This chain is 1,4-alpha-glucan-branching enzyme 2, chloroplastic/amyloplastic (SBE1), found in Zea mays (Maize).